The sequence spans 122 residues: Large ribosomal subunit protein uL18 (122 aa).

This sequence belongs to the universal ribosomal protein uL18 family. Part of the 50S ribosomal subunit; part of the 5S rRNA/L5/L18/L25 subcomplex. Contacts the 5S and 23S rRNAs.

In terms of biological role, this is one of the proteins that bind and probably mediate the attachment of the 5S RNA into the large ribosomal subunit, where it forms part of the central protuberance. The chain is Large ribosomal subunit protein uL18 from Mycobacterium leprae (strain TN).